Consider the following 334-residue polypeptide: Ketol-acid reductoisomerase (NADP(+)) (334 aa).

The KARI N-terminal Rossmann domain maps to 1-181 (MNRYYDKNAD…GGGRTGILET (181 aa)). Residues 24 to 27 (YGSQ), Arg47, Ser50, Ser52, and 82 to 85 (DEFQ) contribute to the NADP(+) site. His107 is an active-site residue. Gly133 lines the NADP(+) pocket. Residues 182–323 (SFKDETETDL…ESLRSMMPWI (142 aa)) form the KARI C-terminal knotted domain. The Mg(2+) site is built by Asp190, Glu194, Glu226, and Glu230. Residue Ser251 coordinates substrate.

It belongs to the ketol-acid reductoisomerase family. It depends on Mg(2+) as a cofactor.

It carries out the reaction (2R)-2,3-dihydroxy-3-methylbutanoate + NADP(+) = (2S)-2-acetolactate + NADPH + H(+). The enzyme catalyses (2R,3R)-2,3-dihydroxy-3-methylpentanoate + NADP(+) = (S)-2-ethyl-2-hydroxy-3-oxobutanoate + NADPH + H(+). It functions in the pathway amino-acid biosynthesis; L-isoleucine biosynthesis; L-isoleucine from 2-oxobutanoate: step 2/4. Its pathway is amino-acid biosynthesis; L-valine biosynthesis; L-valine from pyruvate: step 2/4. In terms of biological role, involved in the biosynthesis of branched-chain amino acids (BCAA). Catalyzes an alkyl-migration followed by a ketol-acid reduction of (S)-2-acetolactate (S2AL) to yield (R)-2,3-dihydroxy-isovalerate. In the isomerase reaction, S2AL is rearranged via a Mg-dependent methyl migration to produce 3-hydroxy-3-methyl-2-ketobutyrate (HMKB). In the reductase reaction, this 2-ketoacid undergoes a metal-dependent reduction by NADPH to yield (R)-2,3-dihydroxy-isovalerate. This chain is Ketol-acid reductoisomerase (NADP(+)), found in Ruthia magnifica subsp. Calyptogena magnifica.